A 225-amino-acid polypeptide reads, in one-letter code: Leucyl/phenylalanyl-tRNA--protein transferase (225 aa).

The protein belongs to the L/F-transferase family.

The protein resides in the cytoplasm. The catalysed reaction is N-terminal L-lysyl-[protein] + L-leucyl-tRNA(Leu) = N-terminal L-leucyl-L-lysyl-[protein] + tRNA(Leu) + H(+). It catalyses the reaction N-terminal L-arginyl-[protein] + L-leucyl-tRNA(Leu) = N-terminal L-leucyl-L-arginyl-[protein] + tRNA(Leu) + H(+). It carries out the reaction L-phenylalanyl-tRNA(Phe) + an N-terminal L-alpha-aminoacyl-[protein] = an N-terminal L-phenylalanyl-L-alpha-aminoacyl-[protein] + tRNA(Phe). Its function is as follows. Functions in the N-end rule pathway of protein degradation where it conjugates Leu, Phe and, less efficiently, Met from aminoacyl-tRNAs to the N-termini of proteins containing an N-terminal arginine or lysine. In Nitrobacter winogradskyi (strain ATCC 25391 / DSM 10237 / CIP 104748 / NCIMB 11846 / Nb-255), this protein is Leucyl/phenylalanyl-tRNA--protein transferase.